A 150-amino-acid polypeptide reads, in one-letter code: uncharacterized protein (150 aa).

This is an uncharacterized protein from Rickettsia prowazekii (strain Madrid E).